The following is a 267-amino-acid chain: Glutamate racemase (267 aa).

Substrate contacts are provided by residues 13–14 (DS) and 45–46 (YS). The active-site Proton donor/acceptor is the C77. 78–79 (NT) provides a ligand contact to substrate. The active-site Proton donor/acceptor is the C188. Residue 189–190 (TH) coordinates substrate.

It belongs to the aspartate/glutamate racemases family.

It carries out the reaction L-glutamate = D-glutamate. It functions in the pathway cell wall biogenesis; peptidoglycan biosynthesis. Provides the (R)-glutamate required for cell wall biosynthesis. This is Glutamate racemase from Histophilus somni (strain 129Pt) (Haemophilus somnus).